Consider the following 173-residue polypeptide: uncharacterized protein (173 aa).

Disordered stretches follow at residues 1-23 (MGDLPWAPPEAQAPSTAGAGDVA) and 48-173 (TGAA…APQR). The segment covering 49-60 (GAAPGSAQAGPP) has biased composition (low complexity). The segment covering 70–83 (PRGPQAPPRLPPSL) has biased composition (pro residues). The span at 123–136 (PACAGSSAPGSPAA) shows a compositional bias: low complexity.

This is an uncharacterized protein from Homo sapiens (Human).